The sequence spans 135 residues: Nucleoside diphosphate kinase (135 aa).

ATP contacts are provided by Lys9, Tyr57, Arg85, Thr91, Arg102, and Asn112. His115 functions as the Pros-phosphohistidine intermediate in the catalytic mechanism.

Belongs to the NDK family. Homotetramer. Mg(2+) is required as a cofactor.

It localises to the cytoplasm. It carries out the reaction a 2'-deoxyribonucleoside 5'-diphosphate + ATP = a 2'-deoxyribonucleoside 5'-triphosphate + ADP. The enzyme catalyses a ribonucleoside 5'-diphosphate + ATP = a ribonucleoside 5'-triphosphate + ADP. In terms of biological role, major role in the synthesis of nucleoside triphosphates other than ATP. The ATP gamma phosphate is transferred to the NDP beta phosphate via a ping-pong mechanism, using a phosphorylated active-site intermediate. This is Nucleoside diphosphate kinase from Thermoanaerobacter pseudethanolicus (strain ATCC 33223 / 39E) (Clostridium thermohydrosulfuricum).